A 226-amino-acid chain; its full sequence is N-(5'-phosphoribosyl)anthranilate isomerase (226 aa).

This sequence belongs to the TrpF family.

The catalysed reaction is N-(5-phospho-beta-D-ribosyl)anthranilate = 1-(2-carboxyphenylamino)-1-deoxy-D-ribulose 5-phosphate. It functions in the pathway amino-acid biosynthesis; L-tryptophan biosynthesis; L-tryptophan from chorismate: step 3/5. The chain is N-(5'-phosphoribosyl)anthranilate isomerase (TRP1) from Saccharomyces kudriavzevii (strain ATCC MYA-4449 / AS 2.2408 / CBS 8840 / NBRC 1802 / NCYC 2889) (Yeast).